We begin with the raw amino-acid sequence, 143 residues long: Hemoglobin subunit alpha-1 (143 aa).

Position 2 is an N-acetylserine (Ser-2). Residues 2–143 (SLTEKDKAAV…VSLALAERYR (142 aa)) enclose the Globin domain. Residue His-60 participates in O2 binding. Heme b is bound at residue His-89.

It belongs to the globin family. Hb 1 is a heterotetramer of two alpha-1 and two beta chains. Red blood cells.

Functionally, involved in oxygen transport from gills to the various peripheral tissues. In Cottoperca gobio (Frogmouth), this protein is Hemoglobin subunit alpha-1 (hba1).